Reading from the N-terminus, the 148-residue chain is Large ribosomal subunit protein uL13 (148 aa).

It belongs to the universal ribosomal protein uL13 family. In terms of assembly, part of the 50S ribosomal subunit.

Functionally, this protein is one of the early assembly proteins of the 50S ribosomal subunit, although it is not seen to bind rRNA by itself. It is important during the early stages of 50S assembly. This Oenococcus oeni (strain ATCC BAA-331 / PSU-1) protein is Large ribosomal subunit protein uL13.